Here is a 592-residue protein sequence, read N- to C-terminus: Aspartate--tRNA(Asp/Asn) ligase (592 aa).

Glutamate 182 is a binding site for L-aspartate. Residues 206 to 209 form an aspartate region; sequence QIFK. Residue arginine 228 coordinates L-aspartate. Residues 228-230 and glutamine 237 each bind ATP; that span reads RDE. Histidine 455 is a binding site for L-aspartate. An ATP-binding site is contributed by glutamate 489. Arginine 496 lines the L-aspartate pocket. 541-544 is an ATP binding site; it reads GLDR.

This sequence belongs to the class-II aminoacyl-tRNA synthetase family. Type 1 subfamily. Homodimer.

It localises to the cytoplasm. It catalyses the reaction tRNA(Asx) + L-aspartate + ATP = L-aspartyl-tRNA(Asx) + AMP + diphosphate. Aspartyl-tRNA synthetase with relaxed tRNA specificity since it is able to aspartylate not only its cognate tRNA(Asp) but also tRNA(Asn). Reaction proceeds in two steps: L-aspartate is first activated by ATP to form Asp-AMP and then transferred to the acceptor end of tRNA(Asp/Asn). The polypeptide is Aspartate--tRNA(Asp/Asn) ligase (Caldanaerobacter subterraneus subsp. tengcongensis (strain DSM 15242 / JCM 11007 / NBRC 100824 / MB4) (Thermoanaerobacter tengcongensis)).